The sequence spans 436 residues: UPF0597 protein YhaM (436 aa).

Belongs to the UPF0597 family.

This Salmonella dublin (strain CT_02021853) protein is UPF0597 protein YhaM.